The chain runs to 318 residues: NADH-ubiquinone oxidoreductase chain 1 (318 aa).

Transmembrane regions (helical) follow at residues 2-22 (FMIN…FLTL), 68-88 (ITMF…MWTP), 100-120 (LGVL…LWSG), 146-166 (LAII…PALI), 171-191 (HMWL…STLA), 222-242 (LFFL…TILF), 253-273 (ELYT…FLWV), and 294-314 (LPLT…TAGI).

It belongs to the complex I subunit 1 family.

The protein resides in the mitochondrion inner membrane. It carries out the reaction a ubiquinone + NADH + 5 H(+)(in) = a ubiquinol + NAD(+) + 4 H(+)(out). In terms of biological role, core subunit of the mitochondrial membrane respiratory chain NADH dehydrogenase (Complex I) that is believed to belong to the minimal assembly required for catalysis. Complex I functions in the transfer of electrons from NADH to the respiratory chain. The immediate electron acceptor for the enzyme is believed to be ubiquinone. The sequence is that of NADH-ubiquinone oxidoreductase chain 1 (MT-ND1) from Coelops frithii (East Asian tailless leaf-nosed bat).